A 620-amino-acid chain; its full sequence is Probable potassium transport system protein Kup (620 aa).

Transmembrane regions (helical) follow at residues 11 to 31 (LAFL…LYAF), 51 to 71 (ILSL…LLLV), 100 to 120 (IAML…VITP), 138 to 158 (LAPY…AVQA), 167 to 187 (FFAP…AHAI), 202 to 222 (AVHF…LVVL), 246 to 266 (WFAL…AYLL), 288 to 308 (LILL…SGIF), 334 to 354 (GQIY…FVML), 364 to 384 (AAYG…LVLV), 396 to 416 (VVTI…STST), and 418 to 438 (LMEG…VMYI).

Belongs to the HAK/KUP transporter (TC 2.A.72) family.

It localises to the cell inner membrane. It catalyses the reaction K(+)(in) + H(+)(in) = K(+)(out) + H(+)(out). Transport of potassium into the cell. Likely operates as a K(+):H(+) symporter. The chain is Probable potassium transport system protein Kup from Vibrio cholerae serotype O1 (strain ATCC 39541 / Classical Ogawa 395 / O395).